We begin with the raw amino-acid sequence, 316 residues long: Methionyl-tRNA formyltransferase (316 aa).

108–111 serves as a coordination point for (6S)-5,6,7,8-tetrahydrofolate; sequence SLLP.

Belongs to the Fmt family.

The enzyme catalyses L-methionyl-tRNA(fMet) + (6R)-10-formyltetrahydrofolate = N-formyl-L-methionyl-tRNA(fMet) + (6S)-5,6,7,8-tetrahydrofolate + H(+). Attaches a formyl group to the free amino group of methionyl-tRNA(fMet). The formyl group appears to play a dual role in the initiator identity of N-formylmethionyl-tRNA by promoting its recognition by IF2 and preventing the misappropriation of this tRNA by the elongation apparatus. The chain is Methionyl-tRNA formyltransferase from Heliobacterium modesticaldum (strain ATCC 51547 / Ice1).